A 399-amino-acid chain; its full sequence is MIQVSLPFTREEYAGRLWKVRTEMASRGIDVLVISDPSNMAWLTGYDGWSFYVHQCVLLGLEGEPVWYGRRMDANGALRTCWMDPDNITYYPDHYVQNPDMHPMDYLAQTILPDRGWHEGVVGMEMDNYYFSAKAYQCLLRELPHARFADANSLVNWCRAIKSPQEIEYMRVAGKIVAGMHSRILEVIEPGLPKSKLVSEIYRVGIEGWTSPEGKVFGGDYPAIVPMLPTGKDAAAPHLTWDDSPFREGEGTFFEIAGVYKRYHAPMSRTVYLGRPPSEFVRAESALLEGIENGLEVAKPGNRTADIAMALGAAMDKYGFDRGGARCGYPIGISYPPDWGERTMSLRPSDETILEPGMTFHFMPGLWVEDWGLEITESILITESGCETLADFPRQLFVK.

The protein belongs to the peptidase M24 family.

The protein localises to the cytoplasm. The enzyme catalyses L-ectoine + H2O = (2S)-2-acetamido-4-aminobutanoate. Functionally, involved in the degradation of ectoine, which allows H.elongata to utilize ectoine as both a carbon and a nitrogen source for growth. Catalyzes the hydrolysis of ectoine to N-acetyl-L-2,4-diaminobutyric acid (N-Ac-DABA). It can produce both isoforms N-gamma-acetyl-L-2,4-diaminobutyric acid (N-gamma-Ac-DABA) and N-alpha-acetyl-L-2,4-diaminobutyric acid (-Nalpha-Ac-DABA), however N-alpha-Ac-DABA is the essential substrate for the subsequent catabolic enzyme DoeB. The protein is Ectoine hydrolase of Halomonas elongata (strain ATCC 33173 / DSM 2581 / NBRC 15536 / NCIMB 2198 / 1H9).